Here is a 329-residue protein sequence, read N- to C-terminus: NADH-quinone oxidoreductase subunit H 1 (329 aa).

Helical transmembrane passes span Leu-12–Ala-32, Trp-78–Ile-98, Val-120–Gly-140, Leu-159–Ser-179, Gly-191–Ala-211, Leu-242–Phe-262, Trp-270–Trp-290, and Trp-308–Leu-328.

This sequence belongs to the complex I subunit 1 family. NDH-1 is composed of 14 different subunits. Subunits NuoA, H, J, K, L, M, N constitute the membrane sector of the complex.

It is found in the cell inner membrane. The enzyme catalyses a quinone + NADH + 5 H(+)(in) = a quinol + NAD(+) + 4 H(+)(out). In terms of biological role, NDH-1 shuttles electrons from NADH, via FMN and iron-sulfur (Fe-S) centers, to quinones in the respiratory chain. The immediate electron acceptor for the enzyme in this species is believed to be ubiquinone. Couples the redox reaction to proton translocation (for every two electrons transferred, four hydrogen ions are translocated across the cytoplasmic membrane), and thus conserves the redox energy in a proton gradient. This subunit may bind ubiquinone. The polypeptide is NADH-quinone oxidoreductase subunit H 1 (Geobacter metallireducens (strain ATCC 53774 / DSM 7210 / GS-15)).